A 203-amino-acid polypeptide reads, in one-letter code: N-(5'-phosphoribosyl)anthranilate isomerase (203 aa).

It belongs to the TrpF family.

The enzyme catalyses N-(5-phospho-beta-D-ribosyl)anthranilate = 1-(2-carboxyphenylamino)-1-deoxy-D-ribulose 5-phosphate. It functions in the pathway amino-acid biosynthesis; L-tryptophan biosynthesis; L-tryptophan from chorismate: step 3/5. This chain is N-(5'-phosphoribosyl)anthranilate isomerase, found in Listeria innocua serovar 6a (strain ATCC BAA-680 / CLIP 11262).